Reading from the N-terminus, the 492-residue chain is N-succinylglutamate 5-semialdehyde dehydrogenase (492 aa).

220-225 (GSANTG) provides a ligand contact to NAD(+). Catalysis depends on residues glutamate 243 and cysteine 277.

The protein belongs to the aldehyde dehydrogenase family. AstD subfamily.

It catalyses the reaction N-succinyl-L-glutamate 5-semialdehyde + NAD(+) + H2O = N-succinyl-L-glutamate + NADH + 2 H(+). Its pathway is amino-acid degradation; L-arginine degradation via AST pathway; L-glutamate and succinate from L-arginine: step 4/5. Its function is as follows. Catalyzes the NAD-dependent reduction of succinylglutamate semialdehyde into succinylglutamate. This chain is N-succinylglutamate 5-semialdehyde dehydrogenase, found in Escherichia coli (strain K12 / MC4100 / BW2952).